The following is a 688-amino-acid chain: Potassium-transporting ATPase ATP-binding subunit (688 aa).

Transmembrane regions (helical) follow at residues 35-55 (VMFV…QALG), 62-82 (AGFI…ANFA), 219-239 (IALT…IVTL), and 260-280 (VLIA…LSAI). Aspartate 313 (4-aspartylphosphate intermediate) is an active-site residue. ATP contacts are provided by residues aspartate 350, glutamate 354, 383 to 390 (FSAHTRMS), and lysine 401. The Mg(2+) site is built by aspartate 524 and aspartate 528. Transmembrane regions (helical) follow at residues 594–614 (FAII…LNVM), 622–642 (AILS…PLAL), and 668–688 (VIVP…VGLA).

The protein belongs to the cation transport ATPase (P-type) (TC 3.A.3) family. Type IA subfamily. As to quaternary structure, the system is composed of three essential subunits: KdpA, KdpB and KdpC.

Its subcellular location is the cell inner membrane. It catalyses the reaction K(+)(out) + ATP + H2O = K(+)(in) + ADP + phosphate + H(+). Its function is as follows. Part of the high-affinity ATP-driven potassium transport (or Kdp) system, which catalyzes the hydrolysis of ATP coupled with the electrogenic transport of potassium into the cytoplasm. This subunit is responsible for energy coupling to the transport system and for the release of the potassium ions to the cytoplasm. This Dechloromonas aromatica (strain RCB) protein is Potassium-transporting ATPase ATP-binding subunit.